We begin with the raw amino-acid sequence, 515 residues long: MTKTEEKPFGKLRSFLWPIHTHELKKVLPMFLMFFCITFNYTVLRDTKDTLIVGAPGSGAEAIPFIKFWLVVPCAIIFMLIYAKLSNILSKQALFYAVGTPFLIFFALFPTVIYPLRDVLHPTEFADRLQAILPPGLLGLVAILRNWTFAAFYVLAELWGSVMLSLMFWGFANEITKIHEAKRFYALFGIGANISLLASGRAIVWASKLRASVSEGVDPWGISLRLLMAMTIVSGLVLMASYWWINKNVLTDPRFYNPEEMQKGKKGAKPKMNMKDSFLYLARSPYILLLALLVIAYGICINLIEVTWKSQLKLQYPNMNDYSEFMGNFSFWTGVVSVLIMLFVGGNVIRKFGWLTGALVTPVMVLLTGIVFFALVIFRNQASGLVAMFGTTPLMLAVVVGAIQNILSKSTKYALFDSTKEMAYIPLDQEQKVKGKAAIDVVAARFGKSGGALIQQGLLVICGSIGAMTPYLAVILLFIIAIWLVSATKLNKLFLAQSALKEQEVAQEDSAPASS.

12 helical membrane-spanning segments follow: residues 24 to 44 (LKKV…YTVL), 62 to 82 (AIPF…MLIY), 93 to 113 (ALFY…PTVI), 124 to 144 (EFAD…VAIL), 149 to 169 (FAAF…LMFW), 184 to 204 (FYAL…RAIV), 226 to 246 (LLMA…WWIN), 286 to 306 (YILL…LIEV), 329 to 349 (FSFW…GNVI), 358 to 378 (ALVT…LVIF), 383 to 403 (SGLV…VGAI), and 465 to 485 (IGAM…IWLV).

This sequence belongs to the ADP/ATP translocase tlc family.

The protein resides in the cell membrane. The polypeptide is ADP,ATP carrier protein 1 (tlcA) (Chlamydia pneumoniae (Chlamydophila pneumoniae)).